The primary structure comprises 204 residues: Dihydroorotase (204 aa).

Zn(2+) is bound at residue histidine 34. Leucine 79 is a substrate binding site. Position 107 (aspartate 107) interacts with Zn(2+). The active site involves aspartate 107. Histidine 111 and alanine 123 together coordinate substrate.

This sequence belongs to the metallo-dependent hydrolases superfamily. DHOase family. Class II DHOase subfamily. Homodimer. The cofactor is Zn(2+).

The enzyme catalyses (S)-dihydroorotate + H2O = N-carbamoyl-L-aspartate + H(+). Its pathway is pyrimidine metabolism; UMP biosynthesis via de novo pathway; (S)-dihydroorotate from bicarbonate: step 3/3. Catalyzes the reversible cyclization of carbamoyl aspartate to dihydroorotate. The sequence is that of Dihydroorotase from Serratia marcescens.